Consider the following 1187-residue polypeptide: Metabotropic glutamate receptor-like protein Q (1187 aa).

Residues 1 to 735 are Extracellular-facing; that stretch reads MRLFFKFFYL…TIETSNIAKT (735 aa). Residues Asn35, Asn44, Asn55, Asn177, Asn258, Asn275, Asn397, Asn402, Asn462, Asn526, Asn527, Asn557, Asn562, and Asn684 are each glycosylated (N-linked (GlcNAc...) asparagine). Residues 736–756 form a helical membrane-spanning segment; sequence VMIITTSILVLLILLCFGITI. Topologically, residues 757–768 are cytoplasmic; sequence AYSKEKVINFGN. Residues 769 to 789 form a helical membrane-spanning segment; that stretch reads IVFLILMLFSCLFLCIIIYVS. The Extracellular portion of the chain corresponds to 790–796; sequence IEPTNFS. Asn794 carries an N-linked (GlcNAc...) asparagine glycan. Residues 797 to 817 traverse the membrane as a helical segment; the sequence is CQFSAIVFPIGIGILFTLTLL. At 818–843 the chain is on the cytoplasmic side; it reads KQYKIYKLFKYSDFLKINTDNLKMVK. A helical transmembrane segment spans residues 844–864; sequence YAGLIMVPVFLLVLIGVIVYP. Topologically, residues 865–888 are extracellular; it reads SKPTFILDLHTKTATKYCISRKYY. Residues 889–909 form a helical membrane-spanning segment; the sequence is VFSIVIVVYEVIILLTSCFIA. At 910–925 the chain is on the cytoplasmic side; sequence MKSKRYHSTPGTFYES. Residues 926-946 traverse the membrane as a helical segment; the sequence is LFNSILIYNYTLVFIVLIPLF. The Extracellular portion of the chain corresponds to 947–955; sequence YTLQNNPTT. The helical transmembrane segment at 956–976 threads the bilayer; it reads IYLIYSIGSSILVFATLSIIF. Topologically, residues 977–1095 are cytoplasmic; the sequence is IPKINFLFRR…SPSSQSIDFL (119 aa). Residues 1074 to 1105 show a composition bias toward polar residues; that stretch reads IYPNQIPKQTTNSPSSQSIDFLNNPTIPKNKS. A disordered region spans residues 1074–1187; the sequence is IYPNQIPKQT…RKSMDPSLDS (114 aa). Over residues 1114–1124 the composition is skewed to basic residues; sequence KKPKKKLKSKI. Low complexity predominate over residues 1125–1174; it reads ISKSANSSPNINNNTINNNNNNNNNNNNNNNNNNNNNNINNNNNNNININ.

The protein belongs to the G-protein coupled receptor 3 family. GABA-B receptor subfamily.

The protein localises to the membrane. This is Metabotropic glutamate receptor-like protein Q (grlQ) from Dictyostelium discoideum (Social amoeba).